A 135-amino-acid polypeptide reads, in one-letter code: Large ribosomal subunit protein uL16c (135 aa).

Belongs to the universal ribosomal protein uL16 family. As to quaternary structure, part of the 50S ribosomal subunit.

The protein localises to the plastid. The protein resides in the chloroplast. This Panax ginseng (Korean ginseng) protein is Large ribosomal subunit protein uL16c.